The primary structure comprises 156 residues: Putative pre-16S rRNA nuclease (156 aa).

The protein belongs to the YqgF nuclease family.

It localises to the cytoplasm. Its function is as follows. Could be a nuclease involved in processing of the 5'-end of pre-16S rRNA. In Ehrlichia ruminantium (strain Gardel), this protein is Putative pre-16S rRNA nuclease.